We begin with the raw amino-acid sequence, 100 residues long: Enhancer of yellow 2 transcription factor (100 aa).

Belongs to the ENY2 family. As to quaternary structure, component of the nuclear pore complex (NPC)-associated AMEX complex (anchoring and mRNA export complex), composed of at least e(y)2 and xmas-2. Component of the SAGA transcription coactivator-HAT complexes, at least composed of Ada2b, e(y)2, Pcaf/Gcn5, Taf10 and Nipped-A/Trrap. Within the SAGA complex, e(y)2, Sgf11, and not/nonstop form an additional subcomplex of SAGA called the DUB module (deubiquitination module). Component of the THO complex, composed of at least e(y)2, HPR1, THO2, THOC5, THOC6 and THOC7. Interacts with e(y)1. Interacts with su(Hw) (via zinc fingers). Interacts with xmas-2; required for localization to the nuclear periphery. Interacts with the nuclear pore complex (NPC).

It localises to the nucleus. The protein localises to the nucleoplasm. The protein resides in the cytoplasm. In terms of biological role, involved in mRNA export coupled transcription activation by association with both the AMEX and the SAGA complexes. The SAGA complex is a multiprotein complex that activates transcription by remodeling chromatin and mediating histone acetylation and deubiquitination. Within the SAGA complex, participates in a subcomplex that specifically deubiquitinates histone H2B. The SAGA complex is recruited to specific gene promoters by activators, where it is required for transcription. Required for nuclear receptor-mediated transactivation. Involved in transcription elongation by recruiting the THO complex onto nascent mRNA. The AMEX complex functions in docking export-competent ribonucleoprotein particles (mRNPs) to the nuclear entrance of the nuclear pore complex (nuclear basket). AMEX participates in mRNA export and accurate chromatin positioning in the nucleus by tethering genes to the nuclear periphery. This Drosophila pseudoobscura pseudoobscura (Fruit fly) protein is Enhancer of yellow 2 transcription factor.